We begin with the raw amino-acid sequence, 281 residues long: TIP41-like protein (281 aa).

It belongs to the TIP41 family.

The protein is TIP41-like protein of Caenorhabditis elegans.